Here is a 99-residue protein sequence, read N- to C-terminus: Beta-defensin 127 (99 aa).

Residues 1-20 form the signal peptide; sequence MGLFMIIAILLFQKPTVTEQ. Cystine bridges form between Cys-24–Cys-53, Cys-33–Cys-47, and Cys-37–Cys-54. A propeptide spanning residues 66–99 is cleaved from the precursor; sequence ITKPSHPKPATLALTLQDYVTIIENFPSLKTQST.

It belongs to the beta-defensin family.

It localises to the secreted. Functionally, has antibacterial activity. In Pan troglodytes (Chimpanzee), this protein is Beta-defensin 127 (DEFB127).